The following is a 79-amino-acid chain: Hemoglobin subunit zeta (79 aa).

Ser1 carries the post-translational modification N-acetylserine. Residues 1-79 (SLTKTXXTII…FKLLSHXFLV (79 aa)) enclose the Globin domain. 2 positions are modified to phosphoserine: Ser38 and Ser53. His59 contributes to the heme b binding site.

The protein belongs to the globin family. Heterotetramer of two zeta chains and two epsilon chains.

Its function is as follows. The zeta chain is an alpha-type chain of mammalian embryonic hemoglobin. In Notamacropus eugenii (Tammar wallaby), this protein is Hemoglobin subunit zeta.